Consider the following 154-residue polypeptide: Myoglobin (154 aa).

The 147-residue stretch at 2 to 148 (GLSDGEWQLV…FRNDMAAKYK (147 aa)) folds into the Globin domain. Ser-4 carries the phosphoserine modification. His-65 provides a ligand contact to nitrite. Residue His-65 participates in O2 binding. Thr-68 carries the phosphothreonine modification. Heme b is bound at residue His-94.

This sequence belongs to the globin family. In terms of assembly, monomeric.

The protein localises to the cytoplasm. It is found in the sarcoplasm. It carries out the reaction Fe(III)-heme b-[protein] + nitric oxide + H2O = Fe(II)-heme b-[protein] + nitrite + 2 H(+). The enzyme catalyses H2O2 + AH2 = A + 2 H2O. Functionally, monomeric heme protein which primary function is to store oxygen and facilitate its diffusion within muscle tissues. Reversibly binds oxygen through a pentacoordinated heme iron and enables its timely and efficient release as needed during periods of heightened demand. Depending on the oxidative conditions of tissues and cells, and in addition to its ability to bind oxygen, it also has a nitrite reductase activity whereby it regulates the production of bioactive nitric oxide. Under stress conditions, like hypoxia and anoxia, it also protects cells against reactive oxygen species thanks to its pseudoperoxidase activity. The polypeptide is Myoglobin (MB) (Didelphis virginiana (North American opossum)).